Here is a 252-residue protein sequence, read N- to C-terminus: 2-succinyl-6-hydroxy-2,4-cyclohexadiene-1-carboxylate synthase (252 aa).

It belongs to the AB hydrolase superfamily. MenH family. In terms of assembly, monomer.

The enzyme catalyses 5-enolpyruvoyl-6-hydroxy-2-succinyl-cyclohex-3-ene-1-carboxylate = (1R,6R)-6-hydroxy-2-succinyl-cyclohexa-2,4-diene-1-carboxylate + pyruvate. It functions in the pathway quinol/quinone metabolism; 1,4-dihydroxy-2-naphthoate biosynthesis; 1,4-dihydroxy-2-naphthoate from chorismate: step 3/7. Its pathway is quinol/quinone metabolism; menaquinone biosynthesis. Its function is as follows. Catalyzes a proton abstraction reaction that results in 2,5-elimination of pyruvate from 2-succinyl-5-enolpyruvyl-6-hydroxy-3-cyclohexene-1-carboxylate (SEPHCHC) and the formation of 2-succinyl-6-hydroxy-2,4-cyclohexadiene-1-carboxylate (SHCHC). The protein is 2-succinyl-6-hydroxy-2,4-cyclohexadiene-1-carboxylate synthase of Salmonella enteritidis PT4 (strain P125109).